A 145-amino-acid chain; its full sequence is Protoporphyrinogen IX oxidase (145 aa).

4 helical membrane-spanning segments follow: residues 6–26 (LWFKSAHLISAICWMAGLLYL), 61–81 (AMISTFIFGLINAHIYGFVAL), 83–103 (TWFQFKMFAVLILVIFHGLLA), and 123–143 (IVNEIPAICMVIAVIMVIVKP). His-12 contributes to the heme binding site. Heme is bound at residue Lys-88.

This sequence belongs to the HemJ family. Homodimer. Requires heme b as cofactor.

It localises to the cell membrane. The catalysed reaction is protoporphyrinogen IX + 3 A = protoporphyrin IX + 3 AH2. It participates in porphyrin-containing compound metabolism; protoporphyrin-IX biosynthesis; protoporphyrin-IX from protoporphyrinogen-IX: step 1/1. Functionally, catalyzes the oxidation of protoporphyrinogen IX to protoporphyrin IX. Is involved in the biosynthesis of tetrapyrrole molecules like heme. Does not use oxygen or artificial electron acceptors such as menadione or benzoquinone. The chain is Protoporphyrinogen IX oxidase from Rickettsia prowazekii (strain Madrid E).